A 140-amino-acid chain; its full sequence is Neurotrophin-7 (140 aa).

The propeptide occupies 1–7 (PGPRVRR). Cystine bridges form between C21–C101, C64–C129, and C89–C131.

The protein belongs to the NGF-beta family.

The protein localises to the secreted. In Cyprinus carpio (Common carp), this protein is Neurotrophin-7 (ntf7).